The chain runs to 136 residues: Nucleoside diphosphate kinase (136 aa).

ATP-binding residues include Lys10, Phe58, Arg86, Thr92, Arg104, and Asn114. His117 serves as the catalytic Pros-phosphohistidine intermediate.

It belongs to the NDK family. As to quaternary structure, homohexamer. Requires Mg(2+) as cofactor.

The protein resides in the cytoplasm. The enzyme catalyses a 2'-deoxyribonucleoside 5'-diphosphate + ATP = a 2'-deoxyribonucleoside 5'-triphosphate + ADP. It carries out the reaction a ribonucleoside 5'-diphosphate + ATP = a ribonucleoside 5'-triphosphate + ADP. Major role in the synthesis of nucleoside triphosphates other than ATP. The ATP gamma phosphate is transferred to the NDP beta phosphate via a ping-pong mechanism, using a phosphorylated active-site intermediate. The polypeptide is Nucleoside diphosphate kinase (Mycobacterium bovis (strain ATCC BAA-935 / AF2122/97)).